The primary structure comprises 431 residues: MDSIQIVGGEKLKGTIPISGAKNAALPLMIAALLTEETLTLENIPHLADVELLIRILNNHGVGYAVDGQEFDDDGVNSRTIHFTAQKIATTRAPYELVKKMRASFWVIGPLLARCFEAYVSLPGGCAIGTRPVDFILEGLKAFGAHIAIENGYVHAKAPKGLKGAHYHFPKVTVGGTHVLLMAATMAKGTTVLENAACEPEVTNLIRTLNAMGAQITGEGTTTLTIEGVKKLQGTRIRVIADRIEAGTYAMAVAMAGGDVFLKNANPNHLTTVLKVLQKTGLEIQIEPHGIHVKRNPRNTTIMPVDIKTGPYPAFPTDLQAQFMALMTRAEGVAHITETIFENRFMHVQELNRLGAEIKLDGQTATVYGKEKLQGAPVMATDLRASVSLVIAALAAKGETIVNRVYHLDRGFERLEEKLARCGAKIQRLTA.

22–23 contacts phosphoenolpyruvate; the sequence is KN. Arginine 102 is a binding site for UDP-N-acetyl-alpha-D-glucosamine. The Proton donor role is filled by cysteine 126. Cysteine 126 carries the post-translational modification 2-(S-cysteinyl)pyruvic acid O-phosphothioketal. Residues aspartate 318 and isoleucine 340 each contribute to the UDP-N-acetyl-alpha-D-glucosamine site.

It belongs to the EPSP synthase family. MurA subfamily.

It localises to the cytoplasm. The catalysed reaction is phosphoenolpyruvate + UDP-N-acetyl-alpha-D-glucosamine = UDP-N-acetyl-3-O-(1-carboxyvinyl)-alpha-D-glucosamine + phosphate. Its pathway is cell wall biogenesis; peptidoglycan biosynthesis. In terms of biological role, cell wall formation. Adds enolpyruvyl to UDP-N-acetylglucosamine. The chain is UDP-N-acetylglucosamine 1-carboxyvinyltransferase from Bartonella tribocorum (strain CIP 105476 / IBS 506).